Reading from the N-terminus, the 198-residue chain is MORN repeat-containing protein 4 homolog (198 aa).

Alanine 2 bears the N-acetylalanine mark. A compositionally biased stretch (low complexity) spans 23 to 45 (QHQQHPHQQGQHGHHQQGQGQSQ). Residues 23–46 (QHQQHPHQQGQHGHHQQGQGQSQY) form a disordered region. 4 MORN repeats span residues 64–87 (YIGE…DGTR), 88–109 (YDGQ…ADGA), 111–132 (YEGE…ADGM), and 134–153 (YEGE…TFQD).

In terms of assembly, interacts with ninaC. Phosphorylated under dark conditions and is dephosphorylated by light exposure. Retina. Expressed primarily in the phototransducing compartment of photoreceptor cells, the rhabdomeres and its expression is dependent on ninaC protein (at protein level).

It is found in the membrane. The protein localises to the cell projection. The protein resides in the rhabdomere membrane. Its function is as follows. Plays a role in promoting axonal degeneration following neuronal injury by toxic insult or trauma. Organizes rhabdomeric components to suppress random activation of the phototransduction cascade and thus increases the signaling fidelity of dark-adapted photoreceptors. The rtp/ninaC complex is required for stability of inad and inac and the normal termination of phototransduction in the retina. This chain is MORN repeat-containing protein 4 homolog, found in Drosophila melanogaster (Fruit fly).